A 416-amino-acid polypeptide reads, in one-letter code: Gamma-glutamyl phosphate reductase (416 aa).

Belongs to the gamma-glutamyl phosphate reductase family.

Its subcellular location is the cytoplasm. The enzyme catalyses L-glutamate 5-semialdehyde + phosphate + NADP(+) = L-glutamyl 5-phosphate + NADPH + H(+). It participates in amino-acid biosynthesis; L-proline biosynthesis; L-glutamate 5-semialdehyde from L-glutamate: step 2/2. Functionally, catalyzes the NADPH-dependent reduction of L-glutamate 5-phosphate into L-glutamate 5-semialdehyde and phosphate. The product spontaneously undergoes cyclization to form 1-pyrroline-5-carboxylate. The chain is Gamma-glutamyl phosphate reductase from Halalkalibacterium halodurans (strain ATCC BAA-125 / DSM 18197 / FERM 7344 / JCM 9153 / C-125) (Bacillus halodurans).